We begin with the raw amino-acid sequence, 138 residues long: ATP synthase epsilon chain (138 aa).

It belongs to the ATPase epsilon chain family. F-type ATPases have 2 components, CF(1) - the catalytic core - and CF(0) - the membrane proton channel. CF(1) has five subunits: alpha(3), beta(3), gamma(1), delta(1), epsilon(1). CF(0) has three main subunits: a, b and c.

It is found in the cell inner membrane. In terms of biological role, produces ATP from ADP in the presence of a proton gradient across the membrane. The chain is ATP synthase epsilon chain from Vesicomyosocius okutanii subsp. Calyptogena okutanii (strain HA).